Reading from the N-terminus, the 466-residue chain is Asparagine--tRNA ligase (466 aa).

Belongs to the class-II aminoacyl-tRNA synthetase family. In terms of assembly, homodimer.

It localises to the cytoplasm. The enzyme catalyses tRNA(Asn) + L-asparagine + ATP = L-asparaginyl-tRNA(Asn) + AMP + diphosphate + H(+). The protein is Asparagine--tRNA ligase of Shewanella denitrificans (strain OS217 / ATCC BAA-1090 / DSM 15013).